A 54-amino-acid polypeptide reads, in one-letter code: U-myrmicitoxin(01)-Tb5a (54 aa).

A signal peptide spans 1-26 (MQLSHLLLAFAMIFVMTIMYAPQVQA). Positions 27-38 (DAWADANADADV) are excised as a propeptide.

It belongs to the formicidae venom precursor-01 superfamily. Post-translationally, contains 1 disulfide bond. In terms of tissue distribution, expressed by the venom gland.

The protein resides in the secreted. This is U-myrmicitoxin(01)-Tb5a from Tetramorium bicarinatum (Tramp ant).